The chain runs to 92 residues: Putative pterin-4-alpha-carbinolamine dehydratase (92 aa).

Belongs to the pterin-4-alpha-carbinolamine dehydratase family.

It carries out the reaction (4aS,6R)-4a-hydroxy-L-erythro-5,6,7,8-tetrahydrobiopterin = (6R)-L-erythro-6,7-dihydrobiopterin + H2O. The protein is Putative pterin-4-alpha-carbinolamine dehydratase of Cereibacter sphaeroides (strain ATCC 17023 / DSM 158 / JCM 6121 / CCUG 31486 / LMG 2827 / NBRC 12203 / NCIMB 8253 / ATH 2.4.1.) (Rhodobacter sphaeroides).